An 849-amino-acid polypeptide reads, in one-letter code: G-type lectin S-receptor-like serine/threonine-protein kinase At4g11900 (849 aa).

The first 26 residues, 1-26, serve as a signal peptide directing secretion; sequence MQICKKNVFLLYYGVLVFLSFQVSSS. Positions 27–180 constitute a Bulb-type lectin domain; sequence TDTISTNQPL…PNSSAAVLWQ (154 aa). Residues 27 to 466 lie on the Extracellular side of the membrane; sequence TDTISTNQPL…RKTEHSKGKS (440 aa). N111, N148, N172, and N232 each carry an N-linked (GlcNAc...) asparagine glycan. The region spanning 311–348 is the EGF-like domain; the sequence is PDNRCDVYNSCGSFGICNENREPPPCRCVPGFKREFSQ. 4 disulfides stabilise this stretch: C315–C327, C321–C336, C401–C421, and C405–C411. In terms of domain architecture, PAN spans 368 to 447; it reads CYKRNDEFLP…KGHTFFLRLA (80 aa). N-linked (GlcNAc...) asparagine glycosylation is present at N450. Residues 467–487 form a helical membrane-spanning segment; sequence IVLPLVLASLVATAACFVGLY. The Cytoplasmic segment spans residues 488-849; that stretch reads CCISSRIRRK…EATQTELEAR (362 aa). One can recognise a Protein kinase domain in the interval 537-822; the sequence is FSRKKKLGEG…TLPIPKQPTF (286 aa). Residues 543 to 551 and K565 each bind ATP; that span reads LGEGGFGPV. Position 571 is a phosphoserine (S571). The segment at 626–643 is caM-binding; sequence LKSRELDWETRMKIVNGT. D662 acts as the Proton acceptor in catalysis. S666 and S679 each carry phosphoserine. Phosphothreonine is present on T696. A Phosphoserine modification is found at S837. T844 is modified (phosphothreonine).

This sequence belongs to the protein kinase superfamily. Ser/Thr protein kinase family.

Its subcellular location is the cell membrane. The catalysed reaction is L-seryl-[protein] + ATP = O-phospho-L-seryl-[protein] + ADP + H(+). The enzyme catalyses L-threonyl-[protein] + ATP = O-phospho-L-threonyl-[protein] + ADP + H(+). This chain is G-type lectin S-receptor-like serine/threonine-protein kinase At4g11900, found in Arabidopsis thaliana (Mouse-ear cress).